The following is a 220-amino-acid chain: Superoxide dismutase [Cu-Zn], chloroplastic (220 aa).

The transit peptide at 1-66 (MAAHCILFSS…AAPKPLTVFA (66 aa)) directs the protein to the chloroplast. The Cu cation site is built by His-112, His-114, and His-129. Cys-123 and Cys-212 are joined by a disulfide. Positions 129, 137, 146, and 149 each coordinate Zn(2+). Cu cation is bound at residue His-186.

This sequence belongs to the Cu-Zn superoxide dismutase family. In terms of assembly, homotetramer. The cofactor is Cu cation. Zn(2+) serves as cofactor.

The protein resides in the plastid. The protein localises to the chloroplast. The catalysed reaction is 2 superoxide + 2 H(+) = H2O2 + O2. In terms of biological role, destroys radicals which are normally produced within the cells and which are toxic to biological systems. This is Superoxide dismutase [Cu-Zn], chloroplastic (SODCP) from Solidago canadensis var. scabra (Tall goldenrod).